Reading from the N-terminus, the 156-residue chain is Transcription antitermination protein NusB (156 aa).

The protein belongs to the NusB family.

Its function is as follows. Involved in transcription antitermination. Required for transcription of ribosomal RNA (rRNA) genes. Binds specifically to the boxA antiterminator sequence of the ribosomal RNA (rrn) operons. The protein is Transcription antitermination protein NusB of Rickettsia akari (strain Hartford).